The chain runs to 381 residues: Alkanesulfonate monooxygenase (381 aa).

Belongs to the SsuD family. In terms of assembly, homotetramer.

The catalysed reaction is an alkanesulfonate + FMNH2 + O2 = an aldehyde + FMN + sulfite + H2O + 2 H(+). In terms of biological role, catalyzes the desulfonation of aliphatic sulfonates. The polypeptide is Alkanesulfonate monooxygenase (Escherichia fergusonii (strain ATCC 35469 / DSM 13698 / CCUG 18766 / IAM 14443 / JCM 21226 / LMG 7866 / NBRC 102419 / NCTC 12128 / CDC 0568-73)).